The primary structure comprises 256 residues: Probable aquaporin TIP-type alpha (256 aa).

Topologically, residues 1-24 (MATRRYSFGRTDEATHPDSMRASL) are cytoplasmic. Residue S7 is modified to Phosphoserine; by CPK. Residues 25-44 (AEFASTFIFVFAGEGSGLAL) traverse the membrane as a helical segment. The Vacuolar portion of the chain corresponds to 45–57 (VKIYQDSAFSAGE). The chain crosses the membrane as a helical span at residues 58–77 (LLALALAHAFALFAAVSASM). The Cytoplasmic segment spans residues 78–102 (HVSGGHVNPAVSFGALIGGRISVIR). The NPA 1 signature appears at 85 to 87 (NPA). A helical membrane pass occupies residues 103–121 (AVYYWIAQLLGSIVAALVL). Over 122 to 143 (RLVTNNMRPSGFHVSPGVGVGH) the chain is Vacuolar. The chain crosses the membrane as a helical span at residues 144–164 (MFILEVVMTFGLMYTVYGTAI). At 165-169 (DPKRG) the chain is on the cytoplasmic side. Residues 170–189 (AVSYIAPLAIGLIVGANILV) traverse the membrane as a helical segment. Topologically, residues 190–216 (GGPFDGACMNPALAFGPSLVGWQWHQH) are vacuolar. The NPA 2 signature appears at 199 to 201 (NPA). The chain crosses the membrane as a helical span at residues 217 to 239 (WIFWVGPLLGAALAALVYEYAVI). The Cytoplasmic segment spans residues 240–256 (PIEPPPHHHQPLATEDY).

This sequence belongs to the MIP/aquaporin (TC 1.A.8) family. TIP (TC 1.A.8.10) subfamily. Post-translationally, phosphorylated by a tonoplast-bound calcium-dependent protein kinase. In terms of tissue distribution, found in all seed tissues that are alive at seed maturity, but not in tissues that lose viability during seed maturation.

The protein resides in the vacuole membrane. In terms of biological role, channel protein in tonoplast. These proteins may allow the diffusion of amino acids and/or peptides from the vacuolar compartment to the cytoplasm. The sequence is that of Probable aquaporin TIP-type alpha from Phaseolus vulgaris (Kidney bean).